The primary structure comprises 63 residues: Large ribosomal subunit protein uL30 (63 aa).

It belongs to the universal ribosomal protein uL30 family. Part of the 50S ribosomal subunit.

The sequence is that of Large ribosomal subunit protein uL30 from Caulobacter sp. (strain K31).